A 508-amino-acid chain; its full sequence is Dihydroniloticin synthase CYP71CD4 (508 aa).

A helical membrane pass occupies residues 6–26 (LDFFSVTSFIIFFLFLFRLVW). Cys449 contacts heme.

It belongs to the cytochrome P450 family. It depends on heme as a cofactor. Mainly expressed in roots and, to a lesser extent, in stems.

Its subcellular location is the membrane. It catalyses the reaction tirucalla-7,24-dien-3beta-ol + 2 reduced [NADPH--hemoprotein reductase] + 2 O2 = dihydroniloticin + 2 oxidized [NADPH--hemoprotein reductase] + 2 H2O + 2 H(+). Its pathway is secondary metabolite biosynthesis; terpenoid biosynthesis. Functionally, monooxygenase involved in the biosynthesis of quassinoids triterpene natural products such as ailanthone, chaparrinone, glaucarubinone and amarolide, allelopathic degraded triterpene lactones inhibiting the growth of other plants, and possessing antimalarial, antifeedant, insecticidal, anti-inflammatory and anticancer activities. Catalyzes the conversion of tirucalladienol to dihydroniloticin. In Ailanthus altissima (Tree-of-heaven), this protein is Dihydroniloticin synthase CYP71CD4.